The sequence spans 398 residues: Acetate kinase (398 aa).

Position 10 (Asn-10) interacts with Mg(2+). An ATP-binding site is contributed by Lys-17. Residue Arg-89 coordinates substrate. The Proton donor/acceptor role is filled by Asp-148. ATP is bound by residues 208–212, 283–285, and 331–335; these read HLGNG, DCR, and GIGEN. Glu-385 lines the Mg(2+) pocket.

This sequence belongs to the acetokinase family. In terms of assembly, homodimer. The cofactor is Mg(2+). Requires Mn(2+) as cofactor.

It is found in the cytoplasm. It carries out the reaction acetate + ATP = acetyl phosphate + ADP. Its pathway is metabolic intermediate biosynthesis; acetyl-CoA biosynthesis; acetyl-CoA from acetate: step 1/2. Functionally, catalyzes the formation of acetyl phosphate from acetate and ATP. Can also catalyze the reverse reaction. The sequence is that of Acetate kinase from Histophilus somni (strain 2336) (Haemophilus somnus).